The following is a 355-amino-acid chain: Tabersonine 16-O-methyltransferase (355 aa).

S-adenosyl-L-methionine is bound by residues 198-201 (IGGG), Asp-222, 222-223 (DL), 242-243 (DM), and Lys-256. The active-site Proton acceptor is the His-260.

This sequence belongs to the class I-like SAM-binding methyltransferase superfamily. Cation-independent O-methyltransferase family. COMT subfamily. As to quaternary structure, homodimer. As to expression, expressed in leaves and flowers. Detected in stems and roots. In leaves, expressed in epidermal cells.

It is found in the cytoplasm. It carries out the reaction 16-hydroxytabersonine + S-adenosyl-L-methionine = 16-methoxytabersonine + S-adenosyl-L-homocysteine + H(+). Its pathway is alkaloid biosynthesis; vindoline biosynthesis. 16-O-methyltransferase involved in the biosynthesis of vindoline. Highly specific for 16-hydroxytabersonine. No activity with tabersonine, 3-hydroxytyramine, 4-hydroxytyramine, 5-hydroxytryptamine (5HT), 2,3-dihydro-3-hydroxytabersonine, lochnericine, hoerhammericine, 16-hydroxy-2,3-dihydro-3-hydroxytabersonine, 16-hydroxylochnericine, 16-hydroxyhoerhammericine, quercetin, kaempferol and caffeic acid as substrates. This is Tabersonine 16-O-methyltransferase from Catharanthus roseus (Madagascar periwinkle).